The chain runs to 257 residues: Ribosome-inactivating protein charybdin (257 aa).

Residue E167 is part of the active site. A disulfide bridge connects residues C217 and C254.

This sequence belongs to the ribosome-inactivating protein family. Type 1 RIP subfamily.

It carries out the reaction Endohydrolysis of the N-glycosidic bond at one specific adenosine on the 28S rRNA.. Functionally, inhibits translation in rabbit reticulocytes. This Drimia maritima (Sea squill) protein is Ribosome-inactivating protein charybdin.